Reading from the N-terminus, the 325-residue chain is DNA-directed RNA polymerase subunit alpha (325 aa).

The interval 1–238 (MSPKNLLKGF…DHLTVFINFE (238 aa)) is alpha N-terminal domain (alpha-NTD). The interval 255-325 (LKAALSKHVE…MGLSFGMRDF (71 aa)) is alpha C-terminal domain (alpha-CTD).

Belongs to the RNA polymerase alpha chain family. Homodimer. The RNAP catalytic core consists of 2 alpha, 1 beta, 1 beta' and 1 omega subunit. When a sigma factor is associated with the core the holoenzyme is formed, which can initiate transcription.

It catalyses the reaction RNA(n) + a ribonucleoside 5'-triphosphate = RNA(n+1) + diphosphate. Its function is as follows. DNA-dependent RNA polymerase catalyzes the transcription of DNA into RNA using the four ribonucleoside triphosphates as substrates. The protein is DNA-directed RNA polymerase subunit alpha of Leptospira biflexa serovar Patoc (strain Patoc 1 / Ames).